Reading from the N-terminus, the 1024-residue chain is Beta-galactosidase (1024 aa).

Substrate is bound by residues asparagine 103 and aspartate 202. Position 202 (aspartate 202) interacts with Na(+). The Mg(2+) site is built by glutamate 417, histidine 419, and glutamate 462. Residues glutamate 462 and 538 to 541 contribute to the substrate site; that span reads EYAH. Glutamate 462 serves as the catalytic Proton donor. Glutamate 538 acts as the Nucleophile in catalysis. Residue asparagine 598 participates in Mg(2+) binding. 2 residues coordinate Na(+): phenylalanine 602 and asparagine 605. Substrate-binding residues include asparagine 605 and tryptophan 1000.

Belongs to the glycosyl hydrolase 2 family. In terms of assembly, homotetramer. The cofactor is Mg(2+). Na(+) serves as cofactor.

The catalysed reaction is Hydrolysis of terminal non-reducing beta-D-galactose residues in beta-D-galactosides.. In Klebsiella pneumoniae, this protein is Beta-galactosidase.